An 82-amino-acid chain; its full sequence is Ferredoxin (82 aa).

The 29-residue stretch at 3–31 (KYTIVDKDTCIACGACGAAAPDIYDYDDE) folds into the 4Fe-4S ferredoxin-type domain. Positions 12, 15, 18, and 62 each coordinate [4Fe-4S] cluster.

Requires [4Fe-4S] cluster as cofactor.

In terms of biological role, ferredoxins are iron-sulfur proteins that transfer electrons in a wide variety of metabolic reactions. This ferredoxin may act as a phosphodonor to cytochrome P450 BioI. In Bacillus subtilis (strain 168), this protein is Ferredoxin (fer).